The chain runs to 595 residues: UvrABC system protein C (595 aa).

One can recognise a GIY-YIG domain in the interval 14-91 (DSPGCYIHKD…IQENKPKYNI (78 aa)). In terms of domain architecture, UVR spans 196-231 (DKIVNELRDKMTKASELMEFERAAEYRDLIEGIGLL).

Belongs to the UvrC family. In terms of assembly, interacts with UvrB in an incision complex.

The protein localises to the cytoplasm. Its function is as follows. The UvrABC repair system catalyzes the recognition and processing of DNA lesions. UvrC both incises the 5' and 3' sides of the lesion. The N-terminal half is responsible for the 3' incision and the C-terminal half is responsible for the 5' incision. This chain is UvrABC system protein C, found in Streptococcus mutans serotype c (strain ATCC 700610 / UA159).